The sequence spans 79 residues: Small ribosomal subunit protein bS18 (79 aa).

The protein belongs to the bacterial ribosomal protein bS18 family. Part of the 30S ribosomal subunit. Forms a tight heterodimer with protein bS6.

Its function is as follows. Binds as a heterodimer with protein bS6 to the central domain of the 16S rRNA, where it helps stabilize the platform of the 30S subunit. This is Small ribosomal subunit protein bS18 from Bradyrhizobium sp. (strain BTAi1 / ATCC BAA-1182).